Here is a 418-residue protein sequence, read N- to C-terminus: Sterigmatocystin 8-O-methyltransferase (418 aa).

A propeptide spanning residues 1 to 41 (MALPSKAALVGLANTLSEQVKRYLATAGETKSPEDHKLCIE) is cleaved from the precursor. 170–176 (MRSGASF) contributes to the substrate binding site. A substrate binding region spans residues 206-225 (LFDYYSTVDEVRGRRFDLGM). S-adenosyl-L-methionine-binding positions include 254–255 (GG), D277, 297–298 (DI), and R313. H317 functions as the Proton acceptor in the catalytic mechanism.

The protein belongs to the class I-like SAM-binding methyltransferase superfamily. Cation-independent O-methyltransferase family. COMT subfamily.

Its subcellular location is the cytoplasm. The protein resides in the vacuole. The enzyme catalyses sterigmatocystin + S-adenosyl-L-methionine = 8-O-methylsterigmatocystin + S-adenosyl-L-homocysteine + H(+). It catalyses the reaction dihydrosterigmatocystin + S-adenosyl-L-methionine = 8-O-methyldihydrosterigmatocystin + S-adenosyl-L-homocysteine + H(+). The protein operates within mycotoxin biosynthesis; aflatoxin biosynthesis. Sterigmatocystin 8-O-methyltransferase; part of the gene cluster that mediates the biosynthesis of aflatoxins, a group of polyketide-derived furanocoumarins, and part of the most toxic and carcinogenic compounds among the known mycotoxins. The four major aflatoxins produced by A.parasiticus are aflatoxin B1 (AFB1), aflatoxin B2 (AFB2), aflatoxin G1 (AFG1) and aflatoxin G2 (AFG2). Within the aflatoxin pathway, the O-methyltransferase aflP uses both sterigmatocystin (ST) and dihydrosterigmatocystin (DHST) as substrates to yield O-methylsterigmatocystin (OMST) and dihydro-O-methylsterigmatocystin (DHOMST), respectively. The biosynthesis of aflatoxins begins with the norsolorinic acid synthase aflC that combines a hexanoyl starter unit produced by the fatty acid synthase aflA/aflB and 7 malonyl-CoA extender units to synthesize the precursor NOR. The second step is the conversion of NOR to averantin and requires the norsolorinic acid ketoreductase aflD, which catalyzes the dehydration of norsolorinic acid to form (1'S)-averantin. The norsolorinic acid reductases aflE and aflF may also play a role in the conversion of NOR to AVN. The cytochrome P450 monooxygenase aflG then catalyzes the hydroxylation of AVN to 5'hydroxyaverantin (HAVN). The next step is performed by the 5'-hydroxyaverantin dehydrogenase aflH that transforms HAVN to 5'-oxoaverantin (OAVN) which is further converted to averufin (AVF) by aflK that plays a dual role in the pathway, as a 5'-oxoaverantin cyclase that mediates conversion of 5'-oxoaverantin, as well as a versicolorin B synthase in a later step in the pathway. The averufin oxidase aflI catalyzes the conversion of AVF to versiconal hemiacetal acetate (VHA). VHA is then the substrate for the versiconal hemiacetal acetate esterase aflJ to yield versiconal (VAL). Versicolorin B synthase aflK then converts VAL to versicolorin B (VERB) by closing the bisfuran ring of aflatoxin which is required for DNA-binding, thus giving to aflatoxin its activity as a mutagen. Then, the activity of the versicolorin B desaturase aflL leads to versicolorin A (VERA). A branch point starts from VERB since it can also be converted to dihydrodemethylsterigmatocystin (DMDHST), probably also by aflL, VERA being a precursor for aflatoxins B1 and G1, and DMDHST for aflatoxins B2 and G2. Next, the versicolorin reductase aflM and the cytochrome P450 monooxygenase aflN are involved in conversion of VERA to demethylsterigmatocystin (DMST). AflX and aflY seem also involved in this step, through probable aflX-mediated epoxide ring-opening step following versicolorin A oxidation and aflY-mediated Baeyer-Villiger oxidation required for the formation of the xanthone ring. The methyltransferase aflO then leads to the modification of DMST to sterigmatocystin (ST), and of DMDHST to dihydrosterigmatocystin (DHST). Both ST and DHST are then substrates of the O-methyltransferase aflP to yield O-methylsterigmatocystin (OMST) and dihydro-O-methylsterigmatocystin (DHOMST), respectively. Finally OMST is converted to aflatoxins B1 and G1, and DHOMST to aflatoxins B2 and G2, via the action of several enzymes including O-methylsterigmatocystin oxidoreductase aflQ, the cytochrome P450 monooxygenase aflU, but also the NADH-dependent flavin oxidoreductase nadA which is specifically required for the synthesis of AFG1. The sequence is that of Sterigmatocystin 8-O-methyltransferase from Aspergillus parasiticus (strain ATCC 56775 / NRRL 5862 / SRRC 143 / SU-1).